A 137-amino-acid polypeptide reads, in one-letter code: Proofreading thioesterase EntH (137 aa).

E63 acts as the Nucleophile or proton acceptor in catalysis.

Belongs to the thioesterase PaaI family. Homotetramer. Dimer of dimers. Interacts specifically with the aryl carrier protein (ArCP) domain of EntB.

The protein localises to the cytoplasm. It participates in siderophore biosynthesis; enterobactin biosynthesis. Functionally, required for optimal enterobactin synthesis. Acts as a proofreading enzyme that prevents EntB misacylation by hydrolyzing the thioester bound existing between EntB and wrongly charged molecules. The polypeptide is Proofreading thioesterase EntH (Escherichia coli O157:H7 (strain EC4115 / EHEC)).